The primary structure comprises 327 residues: Annexin A8 (327 aa).

4 Annexin repeats span residues F21–Y92, P93–Q164, G177–K249, and N253–G324. Positions 266, 268, 270, and 310 each coordinate Ca(2+).

This sequence belongs to the annexin family.

Functionally, this protein is an anticoagulant protein that acts as an indirect inhibitor of the thromboplastin-specific complex, which is involved in the blood coagulation cascade. This Oryctolagus cuniculus (Rabbit) protein is Annexin A8 (ANXA8).